Consider the following 105-residue polypeptide: MAESPFKADIERAQKELTEKMTPGAIAYIPGSSVINKTGSWRVFRPEFKKDKCVRCFLCYIYCPEPAIYLDEEGYPVFDYDYCKGCGICANECPTNAIEMVREVK.

4Fe-4S ferredoxin-type domains are found at residues 44–73 (FRPEFKKDKCVRCFLCYIYCPEPAIYLDEE) and 74–103 (GYPVFDYDYCKGCGICANECPTNAIEMVRE). [4Fe-4S] cluster is bound by residues Cys53, Cys56, Cys59, Cys63, Cys83, Cys86, Cys89, and Cys93.

Heterotetramer of one alpha, one beta, one delta and one gamma chain. [4Fe-4S] cluster serves as cofactor.

This Pyrococcus abyssi (strain GE5 / Orsay) protein is Pyruvate synthase subunit PorD (porD).